The chain runs to 246 residues: NAD-dependent protein deacylase (246 aa).

The Deacetylase sirtuin-type domain maps to 2 to 246 (PTAVSDAAAP…AGVCLPAMLA (245 aa)). An NAD(+)-binding site is contributed by 29–49 (GAGVSAESGVPTFRDALTGLW). 2 residues coordinate substrate: tyrosine 74 and arginine 77. 107–110 (QNVD) provides a ligand contact to NAD(+). The active-site Proton acceptor is histidine 125. Cysteine 137, cysteine 140, cysteine 153, and cysteine 156 together coordinate Zn(2+). Residues 193 to 195 (GTS), 219 to 221 (NPE), and alanine 237 contribute to the NAD(+) site.

It belongs to the sirtuin family. Class III subfamily. The cofactor is Zn(2+).

It localises to the cytoplasm. It carries out the reaction N(6)-acetyl-L-lysyl-[protein] + NAD(+) + H2O = 2''-O-acetyl-ADP-D-ribose + nicotinamide + L-lysyl-[protein]. The enzyme catalyses N(6)-succinyl-L-lysyl-[protein] + NAD(+) + H2O = 2''-O-succinyl-ADP-D-ribose + nicotinamide + L-lysyl-[protein]. Functionally, NAD-dependent lysine deacetylase and desuccinylase that specifically removes acetyl and succinyl groups on target proteins. Modulates the activities of several proteins which are inactive in their acylated form. The chain is NAD-dependent protein deacylase from Ralstonia nicotianae (strain ATCC BAA-1114 / GMI1000) (Ralstonia solanacearum).